The sequence spans 110 residues: Small ribosomal subunit protein uS10 (110 aa).

The protein belongs to the universal ribosomal protein uS10 family. In terms of assembly, part of the 30S ribosomal subunit.

Functionally, involved in the binding of tRNA to the ribosomes. The polypeptide is Small ribosomal subunit protein uS10 (Ehrlichia ruminantium (strain Gardel)).